Reading from the N-terminus, the 201-residue chain is Urease accessory protein UreG (201 aa).

11–18 (GPVGSGKT) is a GTP binding site.

This sequence belongs to the SIMIBI class G3E GTPase family. UreG subfamily. In terms of assembly, homodimer. UreD, UreF and UreG form a complex that acts as a GTP-hydrolysis-dependent molecular chaperone, activating the urease apoprotein by helping to assemble the nickel containing metallocenter of UreC. The UreE protein probably delivers the nickel.

It is found in the cytoplasm. Functionally, facilitates the functional incorporation of the urease nickel metallocenter. This process requires GTP hydrolysis, probably effectuated by UreG. The sequence is that of Urease accessory protein UreG from Synechococcus sp. (strain CC9902).